Reading from the N-terminus, the 274-residue chain is Large ribosomal subunit protein uL2 (274 aa).

The tract at residues 223-257 (VAMNPVDHPHGGGEGRTSGGRHPVTPWGIPTKGYK) is disordered.

Belongs to the universal ribosomal protein uL2 family. Part of the 50S ribosomal subunit. Forms a bridge to the 30S subunit in the 70S ribosome.

Its function is as follows. One of the primary rRNA binding proteins. Required for association of the 30S and 50S subunits to form the 70S ribosome, for tRNA binding and peptide bond formation. It has been suggested to have peptidyltransferase activity; this is somewhat controversial. Makes several contacts with the 16S rRNA in the 70S ribosome. This Geobacter sulfurreducens (strain ATCC 51573 / DSM 12127 / PCA) protein is Large ribosomal subunit protein uL2.